The primary structure comprises 345 residues: Protein-glutamate methylesterase/protein-glutamine glutaminase 2 (345 aa).

The region spanning 1 to 116 is the Response regulatory domain; sequence MVVDDSAVVR…KQFLVDASDD (116 aa). The residue at position 50 (Asp-50) is a 4-aspartylphosphate. One can recognise a CheB-type methylesterase domain in the interval 154–345; the sequence is LQTTERVVAL…AREIMAQMAG (192 aa). Catalysis depends on residues Ser-166, His-192, and Asp-288.

Belongs to the CheB family. Post-translationally, phosphorylated by CheA. Phosphorylation of the N-terminal regulatory domain activates the methylesterase activity.

It is found in the cytoplasm. The enzyme catalyses [protein]-L-glutamate 5-O-methyl ester + H2O = L-glutamyl-[protein] + methanol + H(+). It carries out the reaction L-glutaminyl-[protein] + H2O = L-glutamyl-[protein] + NH4(+). In terms of biological role, involved in chemotaxis. Part of a chemotaxis signal transduction system that modulates chemotaxis in response to various stimuli. Catalyzes the demethylation of specific methylglutamate residues introduced into the chemoreceptors (methyl-accepting chemotaxis proteins or MCP) by CheR. Also mediates the irreversible deamidation of specific glutamine residues to glutamic acid. This is Protein-glutamate methylesterase/protein-glutamine glutaminase 2 from Albidiferax ferrireducens (strain ATCC BAA-621 / DSM 15236 / T118) (Rhodoferax ferrireducens).